The chain runs to 282 residues: E3 ubiquitin-protein ligase RNF217 (282 aa).

The segment at 1–218 (MSCRVCLEDR…LSIFGCKYRY (218 aa)) is TRIAD supradomain. Cys-3, Cys-6, Cys-23, Cys-26, Cys-123, Cys-126, His-131, Cys-136, Cys-163, and Cys-166 together coordinate Zn(2+). The RING-type 1 zinc finger occupies 3–49 (CRVCLEDRSIKPLPCCKKPVCDECLKRYLSSQVQLGQAEIQCPITEC). The IBR-type zinc finger occupies 68 to 136 (IKYKYFLELS…HAPWHEGVNC (69 aa)). The RING-type 2; atypical zinc finger occupies 163–192 (CPRCKVHIQRTEGCDHMTCSQCNTNFCYRC). Cys-176 is a catalytic residue. Positions 181, 184, 189, 192, 205, and 214 each coordinate Zn(2+). The helical transmembrane segment at 243-263 (LLIVLGLVLGALAVVIGLFGL) threads the bilayer.

Belongs to the RBR family. RNF217 subfamily.

The protein localises to the cytoplasm. Its subcellular location is the membrane. It carries out the reaction [E2 ubiquitin-conjugating enzyme]-S-ubiquitinyl-L-cysteine + [acceptor protein]-L-lysine = [E2 ubiquitin-conjugating enzyme]-L-cysteine + [acceptor protein]-N(6)-ubiquitinyl-L-lysine.. It functions in the pathway protein modification; protein ubiquitination. Its function is as follows. E3 ubiquitin-protein ligase which accepts ubiquitin from E2 ubiquitin-conjugating enzymes in the form of a thioester and then directly transfers the ubiquitin to targeted substrates. Mediates the degradation of the iron exporter ferroportin/SLC40A1 and thus regulates iron homeostasis. The protein is E3 ubiquitin-protein ligase RNF217 (rnf217) of Xenopus laevis (African clawed frog).